The sequence spans 208 residues: Thymidylate kinase (208 aa).

Position 10 to 17 (10 to 17 (GLEGAGKS)) interacts with ATP.

It belongs to the thymidylate kinase family.

The enzyme catalyses dTMP + ATP = dTDP + ADP. Its function is as follows. Phosphorylation of dTMP to form dTDP in both de novo and salvage pathways of dTTP synthesis. This Pseudoalteromonas translucida (strain TAC 125) protein is Thymidylate kinase.